The following is a 388-amino-acid chain: Alcohol dehydrogenase-like 1 (388 aa).

Zn(2+) contacts are provided by Cys-53, Thr-55, His-76, Cys-106, Cys-109, Cys-112, Cys-120, and Cys-185. Residues Thr-55 and His-76 each coordinate an alcohol. NAD(+) is bound at residue Thr-55. NAD(+)-binding positions include 210 to 215 (GLGAVG), Asp-234, Lys-239, 304 to 306 (LGM), Phe-331, and Arg-381.

It belongs to the zinc-containing alcohol dehydrogenase family. Class-III subfamily. In terms of assembly, homodimer. The cofactor is Zn(2+).

Its subcellular location is the cytoplasm. It carries out the reaction a primary alcohol + NAD(+) = an aldehyde + NADH + H(+). The catalysed reaction is a secondary alcohol + NAD(+) = a ketone + NADH + H(+). The protein is Alcohol dehydrogenase-like 1 of Arabidopsis thaliana (Mouse-ear cress).